A 273-amino-acid chain; its full sequence is Ribonuclease Z (273 aa).

Positions 61, 63, 146, 169, and 233 each coordinate Zn(2+).

This sequence belongs to the RNase Z family. Homodimer. It depends on Zn(2+) as a cofactor.

The enzyme catalyses Endonucleolytic cleavage of RNA, removing extra 3' nucleotides from tRNA precursor, generating 3' termini of tRNAs. A 3'-hydroxy group is left at the tRNA terminus and a 5'-phosphoryl group is left at the trailer molecule.. Its function is as follows. Zinc phosphodiesterase, which displays some tRNA 3'-processing endonuclease activity. Probably involved in tRNA maturation, by removing a 3'-trailer from precursor tRNA. The polypeptide is Ribonuclease Z (Mycobacterium tuberculosis (strain ATCC 25177 / H37Ra)).